Consider the following 289-residue polypeptide: Glycerol facilitator-aquaporin gla (289 aa).

Transmembrane regions (helical) follow at residues 10 to 30 (ITEFVGTALLIIMGNGAVANV) and 41 to 61 (SWMIIGWGYGLGVMLPAVAFG). Residues 68–70 (NPA) carry the NPA 1 motif. The next 3 helical transmembrane spans lie at 87-107 (AQYIIAQVLGAMFGQLLIVMV), 151-171 (FVGSFVLFFGAVAATNIFFGS), and 209-229 (MVAHLFLGFLVMGLVVALGGP). An NPA 2 motif is present at residues 235-237 (NPA). Residues 264–284 (WYAWVPVLAPILASLAAVALF) form a helical membrane-spanning segment.

The protein belongs to the MIP/aquaporin (TC 1.A.8) family.

Its subcellular location is the cell membrane. Functionally, mixed channel protein that transports both water and glycerol. This chain is Glycerol facilitator-aquaporin gla (gla), found in Lactococcus lactis subsp. lactis (strain IL1403) (Streptococcus lactis).